A 152-amino-acid chain; its full sequence is Pseudo histidine-containing phosphotransfer protein 5 (152 aa).

Residues 38–140 enclose the HPt domain; it reads NPNFAEEVVS…ESYFQLLRQA (103 aa).

Functions as a two-component phosphorelay mediator between cytokinin sensor histidine kinases and response regulators (B-type ARRs). Plays an important role in propagating cytokinin signal transduction. The sequence is that of Pseudo histidine-containing phosphotransfer protein 5 from Oryza sativa subsp. japonica (Rice).